The following is an 807-amino-acid chain: DNA gyrase subunit B (807 aa).

The 115-residue stretch at 429-543 folds into the Toprim domain; sequence SELFIVEGDS…KGYLYIAQPP (115 aa). Mg(2+) contacts are provided by Glu-435, Asp-508, and Asp-510.

This sequence belongs to the type II topoisomerase GyrB family. In terms of assembly, heterotetramer, composed of two GyrA and two GyrB chains. In the heterotetramer, GyrA contains the active site tyrosine that forms a transient covalent intermediate with DNA, while GyrB binds cofactors and catalyzes ATP hydrolysis. Mg(2+) serves as cofactor. The cofactor is Mn(2+). Requires Ca(2+) as cofactor.

It is found in the cytoplasm. It carries out the reaction ATP-dependent breakage, passage and rejoining of double-stranded DNA.. Its function is as follows. A type II topoisomerase that negatively supercoils closed circular double-stranded (ds) DNA in an ATP-dependent manner to modulate DNA topology and maintain chromosomes in an underwound state. Negative supercoiling favors strand separation, and DNA replication, transcription, recombination and repair, all of which involve strand separation. Also able to catalyze the interconversion of other topological isomers of dsDNA rings, including catenanes and knotted rings. Type II topoisomerases break and join 2 DNA strands simultaneously in an ATP-dependent manner. The sequence is that of DNA gyrase subunit B from Rickettsia typhi (strain ATCC VR-144 / Wilmington).